A 288-amino-acid chain; its full sequence is Light-independent protochlorophyllide reductase iron-sulfur ATP-binding protein (288 aa).

ATP is bound by residues 10-15 and lysine 39; that span reads GIGKST. Serine 14 lines the Mg(2+) pocket. Residues cysteine 95 and cysteine 129 each contribute to the [4Fe-4S] cluster site. 180–181 is a binding site for ATP; sequence NR.

This sequence belongs to the NifH/BchL/ChlL family. As to quaternary structure, homodimer. Protochlorophyllide reductase is composed of three subunits; ChlL, ChlN and ChlB. It depends on [4Fe-4S] cluster as a cofactor.

It is found in the plastid. Its subcellular location is the chloroplast. It catalyses the reaction chlorophyllide a + oxidized 2[4Fe-4S]-[ferredoxin] + 2 ADP + 2 phosphate = protochlorophyllide a + reduced 2[4Fe-4S]-[ferredoxin] + 2 ATP + 2 H2O. Its pathway is porphyrin-containing compound metabolism; chlorophyll biosynthesis (light-independent). In terms of biological role, component of the dark-operative protochlorophyllide reductase (DPOR) that uses Mg-ATP and reduced ferredoxin to reduce ring D of protochlorophyllide (Pchlide) to form chlorophyllide a (Chlide). This reaction is light-independent. The L component serves as a unique electron donor to the NB-component of the complex, and binds Mg-ATP. The polypeptide is Light-independent protochlorophyllide reductase iron-sulfur ATP-binding protein (Chara vulgaris (Common stonewort)).